Reading from the N-terminus, the 242-residue chain is Probable transcriptional regulatory protein Dred_1658 (242 aa).

This sequence belongs to the TACO1 family.

Its subcellular location is the cytoplasm. In Desulforamulus reducens (strain ATCC BAA-1160 / DSM 100696 / MI-1) (Desulfotomaculum reducens), this protein is Probable transcriptional regulatory protein Dred_1658.